Here is a 511-residue protein sequence, read N- to C-terminus: Histidine ammonia-lyase (511 aa).

A cross-link (5-imidazolinone (Ala-Gly)) is located at residues 142–144; sequence ASG. At S143 the chain carries 2,3-didehydroalanine (Ser).

The protein belongs to the PAL/histidase family. Post-translationally, contains an active site 4-methylidene-imidazol-5-one (MIO), which is formed autocatalytically by cyclization and dehydration of residues Ala-Ser-Gly.

The protein resides in the cytoplasm. It carries out the reaction L-histidine = trans-urocanate + NH4(+). It participates in amino-acid degradation; L-histidine degradation into L-glutamate; N-formimidoyl-L-glutamate from L-histidine: step 1/3. The polypeptide is Histidine ammonia-lyase (Brucella suis (strain ATCC 23445 / NCTC 10510)).